Reading from the N-terminus, the 266-residue chain is L-aspartate dehydrogenase (266 aa).

Positions 123 and 189 each coordinate NAD(+). His-219 is an active-site residue.

Belongs to the L-aspartate dehydrogenase family.

The catalysed reaction is L-aspartate + NADP(+) + H2O = oxaloacetate + NH4(+) + NADPH + H(+). The enzyme catalyses L-aspartate + NAD(+) + H2O = oxaloacetate + NH4(+) + NADH + H(+). Its pathway is cofactor biosynthesis; NAD(+) biosynthesis; iminoaspartate from L-aspartate (dehydrogenase route): step 1/1. In terms of biological role, specifically catalyzes the NAD or NADP-dependent dehydrogenation of L-aspartate to iminoaspartate. This chain is L-aspartate dehydrogenase, found in Cupriavidus taiwanensis (strain DSM 17343 / BCRC 17206 / CCUG 44338 / CIP 107171 / LMG 19424 / R1) (Ralstonia taiwanensis (strain LMG 19424)).